A 312-amino-acid chain; its full sequence is Heterotepalin-4 (312 aa).

The signal sequence occupies residues 1-22; the sequence is MKSMLVVTISVWLILAPTSTWA. 2 cysteine pairs are disulfide-bonded: cysteine 56/cysteine 280 and cysteine 107/cysteine 128. Glutamate 197 is a catalytic residue. Residues 284–312 constitute a propeptide that is removed on maturation; sequence YNQNAMFPQLIMSTYYNYMANLGDLFEEF.

It catalyses the reaction Endohydrolysis of the N-glycosidic bond at one specific adenosine on the 28S rRNA.. Inhibits protein synthesis in vitro. This chain is Heterotepalin-4, found in Phytolacca heterotepala (Mexican pokeweed).